The chain runs to 265 residues: Catechol O-methyltransferase (265 aa).

At Met-1 to Leu-2 the chain is on the cytoplasmic side. The chain crosses the membrane as a helical; Signal-anchor for type II membrane protein span at residues Leu-3–Leu-19. Topologically, residues Arg-20–Ser-265 are extracellular. S-adenosyl-L-methionine is bound by residues Val-85, Glu-107, Ser-115, Glu-133, Ile-134, Gly-160 to Gln-163, Ser-162, and Asp-184. Asp-184 contacts Mg(2+). Lys-187 contributes to the substrate binding site. Mg(2+)-binding residues include Asp-212 and Asn-213. 2 residues coordinate substrate: Asn-213 and Glu-242. Ser-260, Ser-261, and Ser-265 each carry phosphoserine.

It belongs to the class I-like SAM-binding methyltransferase superfamily. Cation-dependent O-methyltransferase family. It depends on Mg(2+) as a cofactor.

It is found in the cytoplasm. Its subcellular location is the cell membrane. It catalyses the reaction a catechol + S-adenosyl-L-methionine = a guaiacol + S-adenosyl-L-homocysteine + H(+). It carries out the reaction 2-hydroxyestrone + S-adenosyl-L-methionine = 2-hydroxy-3-methoxy-estrone + S-adenosyl-L-homocysteine + H(+). The catalysed reaction is 4-hydroxyestrone + S-adenosyl-L-methionine = 4-methoxyestrone + S-adenosyl-L-homocysteine + H(+). The enzyme catalyses 2-hydroxyestrone + S-adenosyl-L-methionine = 2-methoxyestrone + S-adenosyl-L-homocysteine + H(+). It catalyses the reaction 4-hydroxy-17beta-estradiol + S-adenosyl-L-methionine = 4-methoxy-17beta-estradiol + S-adenosyl-L-homocysteine + H(+). It carries out the reaction 2-hydroxy-17beta-estradiol + S-adenosyl-L-methionine = 2-hydroxy-3-methoxy-17beta-estradiol + S-adenosyl-L-homocysteine + H(+). The catalysed reaction is 2-hydroxy-17beta-estradiol + S-adenosyl-L-methionine = 2-methoxy-17beta-estradiol + S-adenosyl-L-homocysteine + H(+). Functionally, catalyzes the O-methylation, and thereby the inactivation, of catecholamine neurotransmitters and catechol hormones. Also shortens the biological half-lives of certain neuroactive drugs, like L-DOPA, alpha-methyl DOPA and isoproterenol. The chain is Catechol O-methyltransferase from Mus musculus (Mouse).